A 1343-amino-acid polypeptide reads, in one-letter code: DNA-directed RNA polymerase subunit beta (1343 aa).

This sequence belongs to the RNA polymerase beta chain family. As to quaternary structure, the RNAP catalytic core consists of 2 alpha, 1 beta, 1 beta' and 1 omega subunit. When a sigma factor is associated with the core the holoenzyme is formed, which can initiate transcription.

It carries out the reaction RNA(n) + a ribonucleoside 5'-triphosphate = RNA(n+1) + diphosphate. Functionally, DNA-dependent RNA polymerase catalyzes the transcription of DNA into RNA using the four ribonucleoside triphosphates as substrates. This is DNA-directed RNA polymerase subunit beta from Shewanella violacea.